The following is a 261-amino-acid chain: Hemin import ATP-binding protein HmuV (261 aa).

The ABC transporter domain occupies Leu-5–Asp-241. Gly-37–Ser-44 is a binding site for ATP.

The protein belongs to the ABC transporter superfamily. Heme (hemin) importer (TC 3.A.1.14.5) family. The complex is composed of two ATP-binding proteins (HmuV), two transmembrane proteins (HmuU) and a solute-binding protein (HmuT).

The protein resides in the cell inner membrane. Functionally, part of the ABC transporter complex HmuTUV involved in hemin import. Responsible for energy coupling to the transport system. The polypeptide is Hemin import ATP-binding protein HmuV (Rhodopseudomonas palustris (strain BisB5)).